The primary structure comprises 325 residues: Biotin synthase (325 aa).

The Radical SAM core domain maps to Phe-51 to Arg-280. Residues Cys-69, Cys-73, and Cys-76 each contribute to the [4Fe-4S] cluster site. [2Fe-2S] cluster contacts are provided by Ser-113, Cys-145, Cys-205, and Arg-275.

This sequence belongs to the radical SAM superfamily. Biotin synthase family. As to quaternary structure, homodimer. [4Fe-4S] cluster is required as a cofactor. [2Fe-2S] cluster serves as cofactor.

The catalysed reaction is (4R,5S)-dethiobiotin + (sulfur carrier)-SH + 2 reduced [2Fe-2S]-[ferredoxin] + 2 S-adenosyl-L-methionine = (sulfur carrier)-H + biotin + 2 5'-deoxyadenosine + 2 L-methionine + 2 oxidized [2Fe-2S]-[ferredoxin]. Its pathway is cofactor biosynthesis; biotin biosynthesis; biotin from 7,8-diaminononanoate: step 2/2. In terms of biological role, catalyzes the conversion of dethiobiotin (DTB) to biotin by the insertion of a sulfur atom into dethiobiotin via a radical-based mechanism. The polypeptide is Biotin synthase (Clostridioides difficile (strain 630) (Peptoclostridium difficile)).